Consider the following 696-residue polypeptide: UvrABC system protein B (696 aa).

One can recognise a Helicase ATP-binding domain in the interval 45-434 (EGIGDGLSYQ…DEVVEQVVRP (390 aa)). 58 to 65 (GVTGSGKT) contacts ATP. The short motif at 111–134 (YYDYYQPEAYVPQRDLFIEKDSSV) is the Beta-hairpin element. A Helicase C-terminal domain is found at 450–616 (QVDDLLSEIH…GVVKRIKDII (167 aa)). The region spanning 647-682 (GKEIKRLEKQMLDHAKNLEFEKAAAVRDQLAKLKSQ) is the UVR domain.

Belongs to the UvrB family. As to quaternary structure, forms a heterotetramer with UvrA during the search for lesions. Interacts with UvrC in an incision complex.

The protein resides in the cytoplasm. Functionally, the UvrABC repair system catalyzes the recognition and processing of DNA lesions. A damage recognition complex composed of 2 UvrA and 2 UvrB subunits scans DNA for abnormalities. Upon binding of the UvrA(2)B(2) complex to a putative damaged site, the DNA wraps around one UvrB monomer. DNA wrap is dependent on ATP binding by UvrB and probably causes local melting of the DNA helix, facilitating insertion of UvrB beta-hairpin between the DNA strands. Then UvrB probes one DNA strand for the presence of a lesion. If a lesion is found the UvrA subunits dissociate and the UvrB-DNA preincision complex is formed. This complex is subsequently bound by UvrC and the second UvrB is released. If no lesion is found, the DNA wraps around the other UvrB subunit that will check the other stand for damage. In Ralstonia nicotianae (strain ATCC BAA-1114 / GMI1000) (Ralstonia solanacearum), this protein is UvrABC system protein B.